The chain runs to 121 residues: Large ribosomal subunit protein uL14 (121 aa).

Belongs to the universal ribosomal protein uL14 family. In terms of assembly, part of the 50S ribosomal subunit. Forms a cluster with proteins L3 and L19. In the 70S ribosome, L14 and L19 interact and together make contacts with the 16S rRNA in bridges B5 and B8.

Functionally, binds to 23S rRNA. Forms part of two intersubunit bridges in the 70S ribosome. The polypeptide is Large ribosomal subunit protein uL14 (Synechococcus sp. (strain CC9902)).